We begin with the raw amino-acid sequence, 619 residues long: Sodium-dependent dopamine transporter (619 aa).

The Cytoplasmic segment spans residues 1-56 (MSKSKCSVGPMSSVVAPAKEPNAVGPREVELILVKEQNGVQLTNSTLINPPQTPVE). Residues 57–95 (VQERETWSKKIDFLLSVIGFAVDLANVWRFPYLCYKNGG) traverse the membrane as a discontinuously helical segment. Na(+)-binding residues include glycine 75, alanine 77, valine 78, aspartate 79, and asparagine 82. A dopamine-binding site is contributed by aspartate 79. A run of 2 helical transmembrane segments spans residues 96–127 (GAFL…NREG) and 128–171 (AAGV…FSSF). Dopamine is bound by residues serine 149 and glycine 153. Topologically, residues 172-235 (TMDLPWIHCN…SRGIDDLGPP (64 aa)) are extracellular. A disulfide bond links cysteine 180 and cysteine 189. 4 N-linked (GlcNAc...) asparagine glycosylation sites follow: asparagine 181, asparagine 188, asparagine 196, and asparagine 204. The next 2 helical transmembrane spans lie at 236–255 (RWQL…FSLW) and 256–286 (KGVK…GVTL). The Extracellular segment spans residues 287-305 (PGAMDGIRAYLSVDFYRLC). Residues 306-334 (EASVWIDAATQVCFSLGVGFGVLIAFSSY) traverse the membrane as a discontinuously helical segment. Glutamine 316 contacts chloride. Phenylalanine 319 lines the dopamine pocket. Na(+) contacts are provided by serine 320 and asparagine 352. Serine 320 contributes to the chloride binding site. Residues 335 to 375 (NKFTNNCYRDAIITTSINSLTSFSSGFVVFSFLGYMAQKHN) traverse the membrane as a helical segment. A chloride-binding site is contributed by serine 356. The Extracellular portion of the chain corresponds to 376–399 (VPIRDVATDGPGLIFIIYPEAIAT). 3 helical membrane passes run 400–441 (LPLS…QLLH), 442–465 (RHRE…CVTN), and 466–498 (GGIY…AWFY). The Na(+) site is built by leucine 417, aspartate 420, and serine 421. 2 residues coordinate dopamine: serine 421 and alanine 422. Topologically, residues 499–515 (GVQQFSDDIKQMTGQRP) are cytoplasmic. The chain crosses the membrane as a helical span at residues 516 to 541 (NLYWRLCWKLVSPCFLLYVVVVSIVT). The Extracellular portion of the chain corresponds to 542-552 (FRPPHYGAYIF). Residues 553–582 (PDWANALGWIIATSSMAMVPIYATYKFCSL) form a helical membrane-spanning segment. An interaction with TGFB1I1 region spans residues 560-589 (GWIIATSSMAMVPIYATYKFCSLPGSFREK). Over 583-619 (PGSFREKLAYAITPEKDRQLVDRGEVRQFTLRHWLLV) the chain is Cytoplasmic.

It belongs to the sodium:neurotransmitter symporter (SNF) (TC 2.A.22) family. SLC6A3 subfamily. As to quaternary structure, monomer. Homooligomer; disulfide-linked. Interacts with PRKCABP and TGFB1I1. Interacts (via N-terminus) with SYNGR3 (via N-terminus). Interacts with SLC18A2. Interacts with TOR1A (ATP-bound); TOR1A regulates SLC6A3 subcellular location. Interacts with alpha-synuclein/SNCA. Interacts with SEPTIN4. Found in the substantia nigra and ventral tegmental dopamine neurons, in fibers of the medial forebrain bundle ascending into the striatum, and within dense fiber networks and varicosities in the dorsal and ventral striatum (at protein level). Lower expression in the cortex (at protein level). Absent from the corpus callosum. Expressed throughout the retina at postnatal day 8.

The protein resides in the cell membrane. The protein localises to the cell projection. It localises to the neuron projection. It is found in the axon. The enzyme catalyses dopamine(out) + chloride(out) + Na(+)(out) = dopamine(in) + chloride(in) + Na(+)(in). It carries out the reaction (R)-noradrenaline(out) + chloride(out) + Na(+)(out) = (R)-noradrenaline(in) + chloride(in) + Na(+)(in). It catalyses the reaction dopamine(out) + chloride(out) + 2 Na(+)(out) = dopamine(in) + chloride(in) + 2 Na(+)(in). Inhibited by amphetamine, bupropion, cocaine and ritalin. Inhibited by zinc ions. Mediates sodium- and chloride-dependent transport of dopamine. Also mediates sodium- and chloride-dependent transport of norepinephrine (also known as noradrenaline). Regulator of light-dependent retinal hyaloid vessel regression, downstream of OPN5 signaling. The protein is Sodium-dependent dopamine transporter (Slc6a3) of Mus musculus (Mouse).